The following is a 147-amino-acid chain: uncharacterized protein (147 aa).

The region spanning 44–147 (LVGYIDKEIH…LKSIKERLSI (104 aa)) is the HTH LytTR-type domain.

It localises to the cytoplasm. This is an uncharacterized protein from Staphylococcus aureus (strain MRSA252).